Consider the following 366-residue polypeptide: Isocitrate dehydrogenase [NAD] subunit alpha, mitochondrial (366 aa).

Residues 1–27 (MAGPAWISKVSRLLGAFHNPKQVTRGF) constitute a mitochondrion transit peptide. The residue at position 77 (lysine 77) is an N6-succinyllysine. Threonine 101 carries the post-translational modification Phosphothreonine. Substrate contacts are provided by arginine 115, arginine 125, and arginine 146. Lysine 223 bears the N6-acetyllysine mark. Residues aspartate 233, aspartate 257, and aspartate 261 each contribute to the Mg(2+) site. Lysine 343 carries the N6-acetyllysine; alternate modification. An N6-succinyllysine; alternate modification is found at lysine 343. The residue at position 350 (lysine 350) is an N6-succinyllysine.

Belongs to the isocitrate and isopropylmalate dehydrogenases family. Heterooligomer of subunits alpha (IDH3A), beta (IDH3B), and gamma (IDH3G) in the apparent ratio of 2:1:1. The heterodimer containing one IDH3A and one IDH3B subunit and the heterodimer containing one IDH3A and one IDH3G subunit assemble into a heterotetramer (which contains two subunits of IDH3A, one of IDH3B and one of IDH3G) and further into the heterooctamer. Mg(2+) is required as a cofactor. It depends on Mn(2+) as a cofactor.

Its subcellular location is the mitochondrion. The enzyme catalyses D-threo-isocitrate + NAD(+) = 2-oxoglutarate + CO2 + NADH. Its activity is regulated as follows. The heterotetramer and the heterodimer composed of IDH3A and IDH3G subunits can be allosterically activated by citrate (CIT) or/and ADP, and the two activators can act independently or synergistically. The heterodimer composed of IDH3A and IDH3B subunits cannot be allosterically regulated and the allosteric regulation of the heterotetramer is through the IDH3G subunit and not the IDH3B subunit. The IDH3G subunit contains the allosteric site which consists of a CIT-binding site and an ADP-binding site, and the binding of CIT and ADP causes conformational changes at the allosteric site which are transmitted to the active site in the catalytic subunit (IDH3A) through a cascade of conformational changes at the heterodimer interface, leading to stabilization of the isocitrate-binding at the active site and thus activation of the enzyme. ATP can activate the heterotetramer and the heterodimer composed of IDH3A and IDH3G subunits at low concentrations but inhibits their activities at high concentrations, whereas ATP exhibits only inhibitory effect on the heterodimer composed of IDH3A and IDH3B subunits. Its function is as follows. Catalytic subunit of the enzyme which catalyzes the decarboxylation of isocitrate (ICT) into alpha-ketoglutarate. The heterodimer composed of the alpha (IDH3A) and beta (IDH3B) subunits and the heterodimer composed of the alpha (IDH3A) and gamma (IDH3G) subunits, have considerable basal activity but the full activity of the heterotetramer (containing two subunits of IDH3A, one of IDH3B and one of IDH3G) requires the assembly and cooperative function of both heterodimers. This Pongo abelii (Sumatran orangutan) protein is Isocitrate dehydrogenase [NAD] subunit alpha, mitochondrial.